A 330-amino-acid polypeptide reads, in one-letter code: Putative F-box protein At1g57690 (330 aa).

An F-box domain is found at 25 to 72; the sequence is VDIISSLPDVILQHILFSFQTKYAIRTSVLSKRWRHEADAINKALSQY.

The polypeptide is Putative F-box protein At1g57690 (Arabidopsis thaliana (Mouse-ear cress)).